A 241-amino-acid chain; its full sequence is Sugar fermentation stimulation protein homolog (241 aa).

It belongs to the SfsA family.

In Hahella chejuensis (strain KCTC 2396), this protein is Sugar fermentation stimulation protein homolog.